We begin with the raw amino-acid sequence, 88 residues long: Centromere protein W (88 aa).

This sequence belongs to the CENP-W/WIP1 family. In terms of assembly, heterodimer with CENPT; this dimer coassembles with CENPS-CENPX heterodimers at centromeres to form the tetrameric CENP-T-W-S-X complex, which is a subcomplex of the large constitutive centromere-associated network (CCAN, also known as the interphase centromere complex or ICEN). Interacts with NPM1. Highly expressed in ovary, liver, lung and pancreas and to a lower extent in breast and gastrointestinal tract cancers; such as those of the colon, rectum and stomach. Overexpressed in high grade breast invasive tumors. Expressed in many cancer cell types.

It localises to the nucleus. It is found in the chromosome. The protein localises to the centromere. Its subcellular location is the kinetochore. The protein resides in the nucleus matrix. It localises to the nucleolus. Functionally, component of the CENPA-NAC (nucleosome-associated) complex, a complex that plays a central role in assembly of kinetochore proteins, mitotic progression and chromosome segregation. The CENPA-NAC complex recruits the CENPA-CAD (nucleosome distal) complex and may be involved in incorporation of newly synthesized CENPA into centromeres. Part of a nucleosome-associated complex that binds specifically to histone H3-containing nucleosomes at the centromere, as opposed to nucleosomes containing CENPA. Component of the heterotetrameric CENP-T-W-S-X complex that binds and supercoils DNA, and plays an important role in kinetochore assembly. CENPW has a fundamental role in kinetochore assembly and function. It is one of the inner kinetochore proteins, with most further proteins binding downstream. Required for normal chromosome organization and normal progress through mitosis. In Homo sapiens (Human), this protein is Centromere protein W (CENPW).